We begin with the raw amino-acid sequence, 1323 residues long: Inositol hexakisphosphate and diphosphoinositol-pentakisphosphate kinase (1323 aa).

A substrate-binding site is contributed by 26–27; the sequence is RK. Residues Arg109, Lys162, His169, Arg188, 212–215, and 221–223 each bind ATP; these read EEFI and DVK. 188–189 lines the substrate pocket; sequence RK. Residues Lys223 and Arg237 each contribute to the substrate site. Residues Asp284 and 296–298 contribute to the ATP site; that span reads DVN. 301–304 contributes to the substrate binding site; it reads SFVK. Residues 355–426 form a polyphosphoinositide-binding domain region; it reads TTPSGKLAEL…VLELARALVI (72 aa). 2 stretches are compositionally biased toward polar residues: residues 933–947 and 977–992; these read FNLSTNPKPATSSRS and VTPTQLSTPSVTNDDL. Disordered regions lie at residues 933 to 1022, 1043 to 1107, and 1134 to 1155; these read FNLS…SEDD, AMAD…GGGK, and IVIPTPVPSTTTAVVEDEASER. Over residues 993-1006 the composition is skewed to low complexity; it reads SISSNAESTAAEST. Over residues 1062–1074 the composition is skewed to basic and acidic residues; that stretch reads KSMEEGDKPHGEW. The segment covering 1090 to 1101 has biased composition (low complexity); that stretch reads SNEMESNNESME.

This sequence belongs to the histidine acid phosphatase family. VIP1 subfamily.

Its subcellular location is the cytoplasm. It is found in the cytosol. The catalysed reaction is 1D-myo-inositol hexakisphosphate + ATP = 1-diphospho-1D-myo-inositol 2,3,4,5,6-pentakisphosphate + ADP. The enzyme catalyses 5-diphospho-1D-myo-inositol 1,2,3,4,6-pentakisphosphate + ATP + H(+) = 1,5-bis(diphospho)-1D-myo-inositol 2,3,4,6-tetrakisphosphate + ADP. Bifunctional inositol kinase that acts in concert with the IP6K kinases to synthesize the diphosphate group-containing inositol pyrophosphates diphosphoinositol pentakisphosphate, PP-InsP5, and bis-diphosphoinositol tetrakisphosphate, (PP)2-InsP4. PP-InsP5 and (PP)2-InsP4, also respectively called InsP7 and InsP8, may regulate a variety of cellular processes, including apoptosis, vesicle trafficking, cytoskeletal dynamics, and exocytosis. Phosphorylates inositol hexakisphosphate (InsP6) at position 1 to produce PP-InsP5 which is in turn phosphorylated by IP6Ks to produce (PP)2-InsP4. Alternatively, phosphorylates PP-InsP5 at position 1, produced by IP6Ks from InsP6, to produce (PP)2-InsP4. The polypeptide is Inositol hexakisphosphate and diphosphoinositol-pentakisphosphate kinase (Caenorhabditis elegans).